An 843-amino-acid polypeptide reads, in one-letter code: Aconitase AMT8-2 (843 aa).

A substrate-binding site is contributed by 258–260; it reads DSH. [4Fe-4S] cluster is bound by residues Cys-450, Cys-513, and Cys-516. Residues Arg-536, Arg-541, and 712–713 each bind substrate; that span reads SR.

The protein belongs to the aconitase/IPM isomerase family.

It participates in mycotoxin biosynthesis. Functionally, aconitase; part of the gene clusters that mediate the biosynthesis of AM-toxins, host-selective toxins (HSTs) causing Alternaria blotch on apple, a worldwide distributed disease. AM-toxins are cyclic depsipeptides containing the 3 residues 2-hydroxy-isovaleric acid (2-HIV), dehydroalanine, L-alanine which are common for all 3 AM-toxins I to III. The fourth precursor is L-alpha-amino-methoxyphenyl-valeric acid (L-Amv) for AM-toxin I, L-alpha-amino-phenyl-valeric acid (L-Apv) for AM-toxin II, and L-alpha-amino-hydroxyphenyl-valeric acid (L-Ahv) for AM-toxin III. AM-toxins have two target sites for affecting susceptible apple cells; they cause invagination of the plasma membrane and electrolyte loss and chloroplast disorganization. The non-ribosomal peptide synthetase AMT1 contains 4 catalytic modules and is responsible for activation of each residue in AM-toxin. The aldo-keto reductase AMT2 catalyzes the conversion of 2-keto-isovaleric acid (2-KIV) to 2-hydroxy-isovaleric acid (2-HIV), one of the precursor residues incorporated by AMT1 during AM-toxin biosynthesis, by reduction of its ketone to an alcohol. The cytochrome P450 monooxygenase AMT3 and the thioesterase AMT4 are also important for AM-toxin production, but their exact function within the AM-toxin biosynthesis are not known yet. Up to 21 proteins (including AMT1 to AMT4) are predicted to be involved in AM-toxin biosynthesis since their expression ishighly up-regulated in AM-toxin-producing cultures. This chain is Aconitase AMT8-2, found in Alternaria alternata (Alternaria rot fungus).